Reading from the N-terminus, the 193-residue chain is Probable nicotinate-nucleotide adenylyltransferase (193 aa).

Belongs to the NadD family.

The catalysed reaction is nicotinate beta-D-ribonucleotide + ATP + H(+) = deamido-NAD(+) + diphosphate. Its pathway is cofactor biosynthesis; NAD(+) biosynthesis; deamido-NAD(+) from nicotinate D-ribonucleotide: step 1/1. Functionally, catalyzes the reversible adenylation of nicotinate mononucleotide (NaMN) to nicotinic acid adenine dinucleotide (NaAD). This Fusobacterium nucleatum subsp. nucleatum (strain ATCC 25586 / DSM 15643 / BCRC 10681 / CIP 101130 / JCM 8532 / KCTC 2640 / LMG 13131 / VPI 4355) protein is Probable nicotinate-nucleotide adenylyltransferase.